Reading from the N-terminus, the 639-residue chain is MLTHYQLCFQKRSSQNYTVPDPTSCFDVPPWTILCQRATMIMHNNSSALPLFSNVSSFWKRDSHGPGLLDEGASLIGSYDSPETTESFPFSTVETTNSSLNATIKDPLGGHAVWQVVLIAFLTGIIALVTIIGNILVIVSFKVNKQLKTVNNYFLLSLACADLIIGVISMNLFTTYIIMGHWALGNLACDLWLSIDYVASNASVMNLLVISFDRYFSITRPLTYRAKRTTKRAGVMIGLAWIISFVLWAPAILFWQYFVGKRTVPLDECFIQFLSEPIITFGTAIAAFYLPVTIMSILYWRIYKETEKRTKELAGLQASGSEAETARFVHQTGSSRSLSSYELQRQSTKRSSRRKYRRCHFWLTMKSWEPNTDQGDQEHSSSDSWNNNDAAASLENSASSDEEDITAETRAIYSIVLKLPGHSAILNSTKLPSSEDLNESADELQKSDTDSQEKKPKKLQPPKSIQDGGSFQKSFSKLPIQPGSAETATASDGISSVTKTSAALPLSFKEATLAKKFALKTRSQITKRKRMSLIKEKKAAQTLSAILFAFIITWTPYNIMVLVNTFCDCVPKTVWNLGYWLCYINSTVNPVCYALCNKMFRNTFKMLLLCQCDKRKRRKQQYQQRQSVIFHKRIPREAS.

Residues 1 to 115 (MLTHYQLCFQ…DPLGGHAVWQ (115 aa)) are Extracellular-facing. 6 N-linked (GlcNAc...) asparagine glycosylation sites follow: Asn-16, Asn-44, Asn-45, Asn-54, Asn-97, and Asn-101. The chain crosses the membrane as a helical span at residues 116-139 (VVLIAFLTGIIALVTIIGNILVIV). The Cytoplasmic segment spans residues 140–152 (SFKVNKQLKTVNN). Residues 153-173 (YFLLSLACADLIIGVISMNLF) traverse the membrane as a helical segment. The Extracellular segment spans residues 174 to 190 (TTYIIMGHWALGNLACD). Residues Cys-189 and Cys-269 are joined by a disulfide bond. A helical transmembrane segment spans residues 191 to 212 (LWLSIDYVASNASVMNLLVISF). Over 213-232 (DRYFSITRPLTYRAKRTTKR) the chain is Cytoplasmic. Residues 233-255 (AGVMIGLAWIISFVLWAPAILFW) form a helical membrane-spanning segment. Residues 256 to 277 (QYFVGKRTVPLDECFIQFLSEP) are Extracellular-facing. The helical transmembrane segment at 278 to 300 (IITFGTAIAAFYLPVTIMSILYW) threads the bilayer. The Cytoplasmic segment spans residues 301–542 (RIYKETEKRT…LIKEKKAAQT (242 aa)). Disordered regions lie at residues 370–404 (PNTD…DEED) and 431–471 (LPSS…GGSF). A compositionally biased stretch (low complexity) spans 382-393 (SDSWNNNDAAAS). The segment covering 443–454 (ELQKSDTDSQEK) has biased composition (basic and acidic residues). The helical transmembrane segment at 543-563 (LSAILFAFIITWTPYNIMVLV) threads the bilayer. At 564-576 (NTFCDCVPKTVWN) the chain is on the extracellular side. A helical transmembrane segment spans residues 577–596 (LGYWLCYINSTVNPVCYALC). Residues 597-639 (NKMFRNTFKMLLLCQCDKRKRRKQQYQQRQSVIFHKRIPREAS) lie on the Cytoplasmic side of the membrane.

It belongs to the G-protein coupled receptor 1 family. Muscarinic acetylcholine receptor subfamily. CHRM3 sub-subfamily. In terms of tissue distribution, brain, heart atria, and ventricle.

Its subcellular location is the cell membrane. It localises to the postsynaptic cell membrane. Functionally, the muscarinic acetylcholine receptor mediates various cellular responses, including inhibition of adenylate cyclase, breakdown of phosphoinositides and modulation of potassium channels through the action of G proteins. Primary transducing effect is Pi turnover. The protein is Muscarinic acetylcholine receptor M3 (CHRM3) of Gallus gallus (Chicken).